Here is a 339-residue protein sequence, read N- to C-terminus: DNA-directed RNA polymerase subunit alpha (339 aa).

Residues 1-235 form an alpha N-terminal domain (alpha-NTD) region; that stretch reads MVIQKNWQEL…DQLQIFVNFE (235 aa). The segment at 251–339 is alpha C-terminal domain (alpha-CTD); it reads FNPALLKKVD…DLAKRFEEHY (89 aa).

The protein belongs to the RNA polymerase alpha chain family. As to quaternary structure, homodimer. The RNAP catalytic core consists of 2 alpha, 1 beta, 1 beta' and 1 omega subunit. When a sigma factor is associated with the core the holoenzyme is formed, which can initiate transcription.

The enzyme catalyses RNA(n) + a ribonucleoside 5'-triphosphate = RNA(n+1) + diphosphate. Functionally, DNA-dependent RNA polymerase catalyzes the transcription of DNA into RNA using the four ribonucleoside triphosphates as substrates. The polypeptide is DNA-directed RNA polymerase subunit alpha (Methylobacterium sp. (strain 4-46)).